Reading from the N-terminus, the 231-residue chain is Phosphoglycolate phosphatase (231 aa).

The Nucleophile role is filled by Asp-9. The Mg(2+) site is built by Asp-9 and Asp-11. Residue Asp-11 is the Proton donor of the active site. Residue Lys-154 participates in substrate binding. Mg(2+) is bound by residues Asp-177 and Asp-181.

This sequence belongs to the archaeal SPP-like hydrolase family. In terms of assembly, homodimer. Requires Mg(2+) as cofactor.

It carries out the reaction 2-phosphoglycolate + H2O = glycolate + phosphate. In terms of biological role, catalyzes the dephosphorylation of 2-phosphoglycolate. Has phosphatase activity towards p-nitrophenylphosphate (in vitro). The protein is Phosphoglycolate phosphatase of Pyrococcus horikoshii (strain ATCC 700860 / DSM 12428 / JCM 9974 / NBRC 100139 / OT-3).